The chain runs to 77 residues: Ribonuclease P protein component 1 (77 aa).

Belongs to the eukaryotic/archaeal RNase P protein component 1 family. As to quaternary structure, consists of a catalytic RNA component and at least 4-5 protein subunits.

It localises to the cytoplasm. The catalysed reaction is Endonucleolytic cleavage of RNA, removing 5'-extranucleotides from tRNA precursor.. Its function is as follows. Part of ribonuclease P, a protein complex that generates mature tRNA molecules by cleaving their 5'-ends. The polypeptide is Ribonuclease P protein component 1 (Sulfurisphaera tokodaii (strain DSM 16993 / JCM 10545 / NBRC 100140 / 7) (Sulfolobus tokodaii)).